The sequence spans 259 residues: tRNA (guanine-N(7)-)-methyltransferase (259 aa).

The disordered stretch occupies residues 1 to 73; sequence MGHHGQMHAQ…GPAEDPDRPG (73 aa). S-adenosyl-L-methionine is bound by residues Glu91, Glu116, Asn143, and Asp166. Residue Asp166 is part of the active site. Residues Lys170, Asp202, and 238–241 contribute to the substrate site; that span reads TKYE.

The protein belongs to the class I-like SAM-binding methyltransferase superfamily. TrmB family.

It carries out the reaction guanosine(46) in tRNA + S-adenosyl-L-methionine = N(7)-methylguanosine(46) in tRNA + S-adenosyl-L-homocysteine. It functions in the pathway tRNA modification; N(7)-methylguanine-tRNA biosynthesis. Catalyzes the formation of N(7)-methylguanine at position 46 (m7G46) in tRNA. The polypeptide is tRNA (guanine-N(7)-)-methyltransferase (Mycolicibacterium paratuberculosis (strain ATCC BAA-968 / K-10) (Mycobacterium paratuberculosis)).